The primary structure comprises 235 residues: Purine nucleoside phosphorylase DeoD-type (235 aa).

Position 4 (His-4) interacts with a purine D-ribonucleoside. Residues Gly-20, Arg-24, Arg-43, and 87–90 (RVGT) each bind phosphate. A purine D-ribonucleoside contacts are provided by residues 179–181 (EME) and 203–204 (SD). The Proton donor role is filled by Asp-204.

Belongs to the PNP/UDP phosphorylase family. In terms of assembly, homohexamer; trimer of homodimers.

It catalyses the reaction a purine D-ribonucleoside + phosphate = a purine nucleobase + alpha-D-ribose 1-phosphate. The enzyme catalyses a purine 2'-deoxy-D-ribonucleoside + phosphate = a purine nucleobase + 2-deoxy-alpha-D-ribose 1-phosphate. Its function is as follows. Catalyzes the reversible phosphorolytic breakdown of the N-glycosidic bond in the beta-(deoxy)ribonucleoside molecules, with the formation of the corresponding free purine bases and pentose-1-phosphate. In Brevibacillus brevis (strain 47 / JCM 6285 / NBRC 100599), this protein is Purine nucleoside phosphorylase DeoD-type.